A 184-amino-acid chain; its full sequence is MNTSSGWSRQPPASLSELEIHWLFAPGSLTERLSALGEYSLEPVDQRHAAACAADASLLGVEPDSPIWVREVVMRLDAQPCVTARSIASAHALETQWKPLTGYGSLPLGHILYDDPAIVRAPFECALLMPDDPLDAISRRYARAAAPPRARRSAFVRNGATLVVSECFLPQFWSGFAQARLAGA.

3 residues coordinate substrate: Arg70, Leu108, and Glu166.

This sequence belongs to the UbiC family.

Its subcellular location is the cytoplasm. The catalysed reaction is chorismate = 4-hydroxybenzoate + pyruvate. Its pathway is cofactor biosynthesis; ubiquinone biosynthesis. Its function is as follows. Removes the pyruvyl group from chorismate, with concomitant aromatization of the ring, to provide 4-hydroxybenzoate (4HB) for the ubiquinone pathway. This is Probable chorismate pyruvate-lyase 1 from Burkholderia pseudomallei (strain 1710b).